The following is a 212-amino-acid chain: Thymidylate kinase (212 aa).

10–17 (GIDGCGKT) serves as a coordination point for ATP.

This sequence belongs to the thymidylate kinase family.

The catalysed reaction is dTMP + ATP = dTDP + ADP. Its function is as follows. Phosphorylation of dTMP to form dTDP in both de novo and salvage pathways of dTTP synthesis. This chain is Thymidylate kinase, found in Synechococcus sp. (strain RCC307).